Consider the following 210-residue polypeptide: Redox-sensing transcriptional repressor Rex (210 aa).

A DNA-binding region (H-T-H motif) is located at residues 17–56; that stretch reads SYLHLVKKAEADKLEYISGTVIAEELELEPIQVRKDLTIT. 91–96 is a binding site for NAD(+); the sequence is GAGSLG.

The protein belongs to the transcriptional regulatory Rex family. In terms of assembly, homodimer.

Its subcellular location is the cytoplasm. Modulates transcription in response to changes in cellular NADH/NAD(+) redox state. This chain is Redox-sensing transcriptional repressor Rex, found in Treponema denticola (strain ATCC 35405 / DSM 14222 / CIP 103919 / JCM 8153 / KCTC 15104).